A 383-amino-acid polypeptide reads, in one-letter code: Probable aspartate/prephenate aminotransferase (383 aa).

Residues Gly-39, Trp-125, and Asn-175 each coordinate L-aspartate. Lys-234 is subject to N6-(pyridoxal phosphate)lysine. Arg-361 provides a ligand contact to L-aspartate.

The protein belongs to the class-I pyridoxal-phosphate-dependent aminotransferase family. As to quaternary structure, homodimer. Pyridoxal 5'-phosphate is required as a cofactor.

Its subcellular location is the cytoplasm. The catalysed reaction is L-aspartate + 2-oxoglutarate = oxaloacetate + L-glutamate. It catalyses the reaction L-arogenate + oxaloacetate = prephenate + L-aspartate. In terms of biological role, catalyzes the reversible conversion of aspartate and 2-oxoglutarate to glutamate and oxaloacetate. Can also transaminate prephenate in the presence of aspartate. This Thermus aquaticus protein is Probable aspartate/prephenate aminotransferase (aspC).